Reading from the N-terminus, the 1765-residue chain is RANBP2-like and GRIP domain-containing protein 8 (1765 aa).

Position 19 is a phosphothreonine (Thr19). Ser21 carries the post-translational modification Phosphoserine. TPR repeat units follow at residues 26 to 59 (SMKG…QERD), 60 to 93 (PKAH…NPTQ), and 648 to 681 (EDAH…VSYW). Positions 760–804 (GPLYKNGSLRNADSEIKHSTPSPTKYSLSPSKSYKYSPETPPRWT) are disordered. Positions 778–797 (STPSPTKYSLSPSKSYKYSP) are enriched in low complexity. The RanBD1 1 domain occupies 1036-1172 (HFEPVVQMPE…FEECQRLLLD (137 aa)). Disordered regions lie at residues 1216 to 1247 (TEEE…PTLE) and 1306 to 1330 (AKLN…EERD). The segment covering 1231 to 1244 (SDTTIKPNAENTGP) has biased composition (polar residues). The segment covering 1317-1329 (TDEESVVTQEEER) has biased composition (acidic residues). In terms of domain architecture, RanBD1 2 spans 1333–1469 (YFEPVVPLPD…FDEAKTAQEK (137 aa)). Over residues 1580 to 1593 (NNSETSSVAQSGSE) the composition is skewed to polar residues. 2 disordered regions span residues 1580–1621 (NNSE…KNLS) and 1746–1765 (KGKL…RSSG). Basic and acidic residues predominate over residues 1594–1617 (SKVEPKKCELSKNSDIEQSSDSKV). The GRIP domain occupies 1702-1752 (REKSAANLEYLKNVLLQFIFLKPGSERERLLPVINTMLQLSPEEKGKLAAV).

In terms of assembly, interacts with GTP-bound ARL1.

This chain is RANBP2-like and GRIP domain-containing protein 8 (RGPD8), found in Homo sapiens (Human).